The primary structure comprises 317 residues: Lactamase-like protein adaB (317 aa).

Zn(2+)-binding residues include histidine 97, histidine 99, aspartate 101, and histidine 102. Aspartate 101 serves as the catalytic Proton donor/acceptor.

The protein belongs to the metallo-beta-lactamase superfamily. It depends on Zn(2+) as a cofactor.

It carries out the reaction 3-(2,4-dioxopentyl)-2,3,6,8,9-pentahydroxy-1-oxo-1,2,3,4-tetrahydroanthracene-2-carboxyl-[ACP] = 2-acetyl-3,4a,8,10,11,12a-hexahydroxy-1,4,4a,5,12,12a-hexahydrotetracene-1,12-dione + holo-[ACP] + H(+). It participates in secondary metabolite biosynthesis. Functionally, lactamase-like protein; part of the gene cluster that mediates the biosynthesis of the linear tetracyclic TAN-1612 neuropeptide Y receptor antagonist. The decaketide backbone of TAN-1612 is synthesized by the non-reducing polyketide synthase adaA via condensation of one acetyl-CoA starter unit with 9 malonyl-CoA units. The FAD-dependent monooxygenase adaC then performs hydroxylation at C2 while the polaketide chain is still attached to the NRPKS adaA. The alpha-hydroxylation step at C2 appears to be crucial for the following C18-C1 Claisen cyclization and release of the C9-hydroxyl version of TAN-1612 from the NRPKS adaA, two steps performed by the lactamase-like protein adaB. Finally, the O-methyltransferase adaD performs the C9 O-methylation to complete the biosynthesis of TAN-1612. In Aspergillus niger (strain ATCC MYA-4892 / CBS 513.88 / FGSC A1513), this protein is Lactamase-like protein adaB.